The chain runs to 375 residues: Chaperone protein DnaJ (375 aa).

Residues 5–70 (DYYEVLGVSR…QKRAAYDQFG (66 aa)) enclose the J domain. A CR-type zinc finger spans residues 131-209 (GTTVKIRVPS…CHGSGYVEEQ (79 aa)). Zn(2+)-binding residues include C144, C147, C161, C164, C183, C186, C197, and C200. CXXCXGXG motif repeat units follow at residues 144-151 (CKSCSGSG), 161-168 (CGTCNGAG), 183-190 (CPRCRGAG), and 197-204 (CRSCHGSG).

It belongs to the DnaJ family. In terms of assembly, homodimer. The cofactor is Zn(2+).

It localises to the cytoplasm. Participates actively in the response to hyperosmotic and heat shock by preventing the aggregation of stress-denatured proteins and by disaggregating proteins, also in an autonomous, DnaK-independent fashion. Unfolded proteins bind initially to DnaJ; upon interaction with the DnaJ-bound protein, DnaK hydrolyzes its bound ATP, resulting in the formation of a stable complex. GrpE releases ADP from DnaK; ATP binding to DnaK triggers the release of the substrate protein, thus completing the reaction cycle. Several rounds of ATP-dependent interactions between DnaJ, DnaK and GrpE are required for fully efficient folding. Also involved, together with DnaK and GrpE, in the DNA replication of plasmids through activation of initiation proteins. In Hahella chejuensis (strain KCTC 2396), this protein is Chaperone protein DnaJ.